Here is a 217-residue protein sequence, read N- to C-terminus: Formate dehydrogenase, nitrate-inducible, cytochrome b556(Fdn) subunit (217 aa).

Topologically, residues 1–11 are cytoplasmic; that stretch reads MSKSKMIVRTK. Residues 12–36 traverse the membrane as a helical segment; it reads FIDRACHWTVVICFFLVALSGISFF. His18 serves as a coordination point for heme b. The Periplasmic portion of the chain corresponds to 37–52; it reads FPTLQWLTQTFGTPQM. Residues 53 to 74 form a helical membrane-spanning segment; it reads GRILHPFFGIAIFVALMFMFVR. His57 contacts heme b. Residues 75–110 lie on the Cytoplasmic side of the membrane; it reads FVHHNIPDKKDIPWLLNIVEVLKGNEHKVADVGKYN. A helical membrane pass occupies residues 111-134; it reads AGQKMMFWSIMSMIFVLLVTGVII. The Periplasmic portion of the chain corresponds to 135 to 150; that stretch reads WRPYFAQYFPMQVVRY. A helical transmembrane segment spans residues 151 to 175; sequence SLLIHAAAGIILIHAILIHMYMAFW. Heme b is bound by residues His155 and His169. Residue His169 coordinates a menaquinone. The Cytoplasmic segment spans residues 176–217; the sequence is VKGSIKGMIEGKVSRRWAKKHHPRWYREIEKAEAKKESEEGI.

The protein belongs to the formate dehydrogenase gamma subunit family. In terms of assembly, trimer of heterotrimers, consisting of subunits alpha, beta and gamma. It depends on heme as a cofactor.

It is found in the cell inner membrane. Its function is as follows. Formate dehydrogenase allows the bacterium to use formate as major electron donor during anaerobic respiration, when nitrate is used as electron acceptor. Subunit gamma is the cytochrome b556 component of the formate dehydrogenase-N, and also contains a menaquinone reduction site that receives electrons from the beta subunit (FdnH), through its hemes. Formate dehydrogenase-N is part of a system that generates proton motive force, together with the dissimilatory nitrate reductase (Nar). This chain is Formate dehydrogenase, nitrate-inducible, cytochrome b556(Fdn) subunit (fdnI), found in Escherichia coli O157:H7.